The primary structure comprises 777 residues: MMSTRTFGETIEEYEVQHLLGKGGFASVYKARCLHSHQDVAIKMIDKKLIQGTGLTSRVRQEVEIHSRLKHPSVLQLYTFFQDVNYVYLVLELAHNGELQRYMKQHLLRPFTESEGATILRQVVAGLLYLHSHNIMHRDISLSNLLLSKEMHIKIADFGLATQLKRPDERHMTMCGTPNYISPEVVSRLSHGLPADVWSVGCMLYTLLVGRPPFETEGVESTLNKVVMSEFMMPSHLSFEAQDLIHKLLKKSPHERITLEQVLRHPFLKRTVGGSSYSTTPGALNEFSQSLASSDSGIVTFASSDSRKSHRLRSVDNSSGQSMPQIMEEYLPSSNLGYDSKEHRPVYEQHGSYLPTPGDQLENRDAKWPGTNNLAPFTSDSDMIPSPVGEKRLLMPPLETKRLQPTRYKTKNAIMSILRTGEVVLEFVKFKVKYNEDRITDICRISEDGRRIIIYQPDPGRGLPIREHPPDPLIPSENCVYNYENLPNKHWKKYVYAARFVGLVKSKTPKITFFSSLGKCQLMETMTDFEVRFYSGAKLLKSSTDGVKVFNSNGAVLSDNGCAEARNLIDHGNECFSHCVNISNALELAQTKENTCFPVTIGRRPAADMHAGQRFDGLRDTTNFAYSTPKSNQGSINFSVSTISTTRSASDYNSNTPRLNMLAAHQNVPIKRITVPEIGIVTELSHGVVQVQFYDGSMVSVIPKVQGGGITYTQANGLSTHFGNNDDLPFAVRDRINQMPQLQMKLKCAPLLGNARSVDCHLMTPKTTTPFYNRMII.

The Protein kinase domain maps to 14–268 (YEVQHLLGKG…LEQVLRHPFL (255 aa)). ATP contacts are provided by residues 20–28 (LGKGGFASV) and K43. D139 (proton acceptor) is an active-site residue. A compositionally biased stretch (polar residues) spans 371–381 (TNNLAPFTSDS). The disordered stretch occupies residues 371-390 (TNNLAPFTSDSDMIPSPVGE). A Cryptic POLO box 1 (CPB1) domain is found at 390-507 (EKRLLMPPLE…ARFVGLVKSK (118 aa)). One can recognise a Cryptic POLO box 2 (CPB2) domain in the interval 508 to 611 (TPKITFFSSL…GRRPAADMHA (104 aa)). The 80-residue stretch at 669-748 (PIKRITVPEI…MPQLQMKLKC (80 aa)) folds into the POLO box domain.

The protein belongs to the protein kinase superfamily. Ser/Thr protein kinase family. CDC5/Polo subfamily. Homodimer. Ubiquitinated by the SCF(Slimb) ubiquitin ligase complex; leading to its degradation by the proteasome during interphase and regulating centriole number and ensuring the block to centriole reduplication.

It is found in the cytoplasm. Its subcellular location is the cytoskeleton. It localises to the microtubule organizing center. The protein localises to the centrosome. The protein resides in the centriole. It catalyses the reaction L-seryl-[protein] + ATP = O-phospho-L-seryl-[protein] + ADP + H(+). The catalysed reaction is L-threonyl-[protein] + ATP = O-phospho-L-threonyl-[protein] + ADP + H(+). Serine/threonine-protein kinase that plays a central role in centriole duplication. Able to trigger procentriole formation on the surface of the mother centriole cylinder, using mother centriole as a platform, leading to the recruitment of centriole biogenesis proteins such as sas-6. When overexpressed, it is able to induce centrosome amplification through the simultaneous generation of multiple procentrioles adjoining each parental centriole during S phase. Centrosome amplification following overexpression can initiate tumorigenesis, highlighting the importance of centrosome regulation in cancers. The sequence is that of Serine/threonine-protein kinase PLK4 (SAK) from Drosophila pseudoobscura pseudoobscura (Fruit fly).